Here is a 119-residue protein sequence, read N- to C-terminus: Ribosome-binding factor A (119 aa).

It belongs to the RbfA family. As to quaternary structure, monomer. Binds 30S ribosomal subunits, but not 50S ribosomal subunits or 70S ribosomes.

Its subcellular location is the cytoplasm. Its function is as follows. One of several proteins that assist in the late maturation steps of the functional core of the 30S ribosomal subunit. Associates with free 30S ribosomal subunits (but not with 30S subunits that are part of 70S ribosomes or polysomes). Required for efficient processing of 16S rRNA. May interact with the 5'-terminal helix region of 16S rRNA. In Pseudothermotoga lettingae (strain ATCC BAA-301 / DSM 14385 / NBRC 107922 / TMO) (Thermotoga lettingae), this protein is Ribosome-binding factor A.